The primary structure comprises 156 residues: Transcriptional repressor NrdR (156 aa).

The segment at 3–34 is a zinc-finger region; that stretch reads CPKCSSTHSRVVDSRHADDANAIRRRRECENC. The ATP-cone domain maps to 49–139; the sequence is LIVVKKDGTR…VYKEFKDVDQ (91 aa).

The protein belongs to the NrdR family. Zn(2+) serves as cofactor.

Functionally, negatively regulates transcription of bacterial ribonucleotide reductase nrd genes and operons by binding to NrdR-boxes. This is Transcriptional repressor NrdR from Staphylococcus haemolyticus (strain JCSC1435).